Consider the following 482-residue polypeptide: Bactericidal permeability-increasing protein (482 aa).

The N-terminal stretch at 1 to 26 is a signal peptide; that stretch reads MARGPDTARRWATLVVLAALSTAVTT. The segment at 27–36 is central sheet, part 1; it reads TNPGIVARIT. The interval 36-219 is N-terminal barrel; it reads TQKGLDYACQ…SKLQPYFQTL (184 aa). Asn-62 is a glycosylation site (N-linked (GlcNAc...) asparagine). Cys-161 and Cys-201 form a disulfide bridge. The interval 221–285 is central sheet, part 2; the sequence is VTTKLDKVAG…HDRMVYLGIS (65 aa). Residues 235-240 form a cleavage sites for elastase region; the sequence is LVAPPR. The segment at 286-456 is C-terminal barrel; that stretch reads EYFFNTAGFV…LQKGFPLPLP (171 aa). Asn-303, Asn-375, Asn-389, and Asn-463 each carry an N-linked (GlcNAc...) asparagine glycan. A central sheet, part 3 region spans residues 463–482; that stretch reads NLTLQPYQDFLLFGADVHYS.

It belongs to the BPI/LBP/Plunc superfamily. BPI/LBP family. As to quaternary structure, monomer. Homodimer; disulfide-linked. In terms of tissue distribution, restricted to cells of the myeloid series.

Its subcellular location is the secreted. It localises to the cytoplasmic granule membrane. Functionally, the cytotoxic action of BPI is limited to many species of Gram-negative bacteria; this specificity may be explained by a strong affinity of the very basic N-terminal half for the negatively charged lipopolysaccharides that are unique to the Gram-negative bacterial outer envelope. The polypeptide is Bactericidal permeability-increasing protein (BPI) (Bos taurus (Bovine)).